Here is a 487-residue protein sequence, read N- to C-terminus: Glutamyl-tRNA(Gln) amidotransferase subunit A (487 aa).

Active-site charge relay system residues include lysine 75 and serine 150. Residue serine 174 is the Acyl-ester intermediate of the active site.

This sequence belongs to the amidase family. GatA subfamily. Heterotrimer of A, B and C subunits.

The enzyme catalyses L-glutamyl-tRNA(Gln) + L-glutamine + ATP + H2O = L-glutaminyl-tRNA(Gln) + L-glutamate + ADP + phosphate + H(+). Allows the formation of correctly charged Gln-tRNA(Gln) through the transamidation of misacylated Glu-tRNA(Gln) in organisms which lack glutaminyl-tRNA synthetase. The reaction takes place in the presence of glutamine and ATP through an activated gamma-phospho-Glu-tRNA(Gln). This Deinococcus deserti (strain DSM 17065 / CIP 109153 / LMG 22923 / VCD115) protein is Glutamyl-tRNA(Gln) amidotransferase subunit A.